A 59-amino-acid polypeptide reads, in one-letter code: Large ribosomal subunit protein bL33 (59 aa).

Belongs to the bacterial ribosomal protein bL33 family.

In Prosthecochloris aestuarii (strain DSM 271 / SK 413), this protein is Large ribosomal subunit protein bL33.